A 182-amino-acid polypeptide reads, in one-letter code: Ribosome maturation factor RimM (182 aa).

The 78-residue stretch at 99 to 176 folds into the PRC barrel domain; sequence DDEYYHADLI…ELPAEIEGDT (78 aa).

The protein belongs to the RimM family. Binds ribosomal protein uS19.

The protein resides in the cytoplasm. An accessory protein needed during the final step in the assembly of 30S ribosomal subunit, possibly for assembly of the head region. Essential for efficient processing of 16S rRNA. May be needed both before and after RbfA during the maturation of 16S rRNA. It has affinity for free ribosomal 30S subunits but not for 70S ribosomes. The chain is Ribosome maturation factor RimM from Rhodopseudomonas palustris (strain HaA2).